Consider the following 322-residue polypeptide: Putative integrase ORF3 (322 aa).

Residues 153–322 (RGKLTDFKSI…SSKEMFLQNI (170 aa)) enclose the Integrase catalytic domain.

It belongs to the plectrovirus integrase ORF3 family.

This protein may encode an integrase, which is necessary for integration of the viral DNA into host genome. The protein is Putative integrase ORF3 of Spiroplasma virus SpV1-R8A2 B (SpV1).